Consider the following 344-residue polypeptide: Ketol-acid reductoisomerase (NADP(+)) (344 aa).

Positions 1–181 constitute a KARI N-terminal Rossmann domain; sequence MATMYYEQNI…GAARGGLLET (181 aa). Residues 25–28, arginine 48, serine 52, and 82–85 contribute to the NADP(+) site; these read YGSQ and DERQ. The active site involves histidine 107. Glycine 133 is a binding site for NADP(+). The 146-residue stretch at 182–327 folds into the KARI C-terminal knotted domain; that stretch reads TFKEETETDL…AKLREMMPFI (146 aa). 4 residues coordinate Mg(2+): aspartate 190, glutamate 194, glutamate 226, and glutamate 230. A substrate-binding site is contributed by serine 251.

It belongs to the ketol-acid reductoisomerase family. It depends on Mg(2+) as a cofactor.

The catalysed reaction is (2R)-2,3-dihydroxy-3-methylbutanoate + NADP(+) = (2S)-2-acetolactate + NADPH + H(+). It catalyses the reaction (2R,3R)-2,3-dihydroxy-3-methylpentanoate + NADP(+) = (S)-2-ethyl-2-hydroxy-3-oxobutanoate + NADPH + H(+). Its pathway is amino-acid biosynthesis; L-isoleucine biosynthesis; L-isoleucine from 2-oxobutanoate: step 2/4. It functions in the pathway amino-acid biosynthesis; L-valine biosynthesis; L-valine from pyruvate: step 2/4. Its function is as follows. Involved in the biosynthesis of branched-chain amino acids (BCAA). Catalyzes an alkyl-migration followed by a ketol-acid reduction of (S)-2-acetolactate (S2AL) to yield (R)-2,3-dihydroxy-isovalerate. In the isomerase reaction, S2AL is rearranged via a Mg-dependent methyl migration to produce 3-hydroxy-3-methyl-2-ketobutyrate (HMKB). In the reductase reaction, this 2-ketoacid undergoes a metal-dependent reduction by NADPH to yield (R)-2,3-dihydroxy-isovalerate. The sequence is that of Ketol-acid reductoisomerase (NADP(+)) from Lysinibacillus sphaericus (strain C3-41).